Reading from the N-terminus, the 122-residue chain is Large ribosomal subunit protein bL19 (122 aa).

It belongs to the bacterial ribosomal protein bL19 family.

This protein is located at the 30S-50S ribosomal subunit interface and may play a role in the structure and function of the aminoacyl-tRNA binding site. This chain is Large ribosomal subunit protein bL19, found in Novosphingobium aromaticivorans (strain ATCC 700278 / DSM 12444 / CCUG 56034 / CIP 105152 / NBRC 16084 / F199).